Reading from the N-terminus, the 150-residue chain is uncharacterized protein (150 aa).

Helical transmembrane passes span 50 to 70, 80 to 100, and 127 to 147; these read VVSV…VIHL, LYIT…QLWL, and KVVI…FFIE.

It is found in the membrane. This is an uncharacterized protein from Schizosaccharomyces pombe (strain 972 / ATCC 24843) (Fission yeast).